The chain runs to 358 residues: Hydroxyproline O-arabinosyltransferase 3 (358 aa).

A helical; Signal-anchor membrane pass occupies residues 8–28 (LLFLLGFGFFVVTYNLLTLIV).

As to expression, ubiquitous.

Its subcellular location is the golgi apparatus. It is found in the cis-Golgi network membrane. It carries out the reaction trans-4-hydroxy-L-prolyl-[protein] + UDP-beta-L-arabinofuranose = O-(beta-L-arabinofuranosyl)-trans-4-hydroxy-L-prolyl-[protein] + UDP + H(+). Functionally, glycosyltransferase involved in the O-arabinosylation of several proteins including extensins and small signaling peptides. Catalyzes the transfer of the initial L-arabinose to the hydroxyl group of Hyp residues. Contributes redundantly with HPAT1 and HPAT2 to arabinosylation of EXT3, but main contributor to arabinosylation of CLE peptides. The polypeptide is Hydroxyproline O-arabinosyltransferase 3 (Arabidopsis thaliana (Mouse-ear cress)).